Consider the following 428-residue polypeptide: Glycine reductase complex component B subunits alpha and beta (428 aa).

The active-site Schiff-base intermediate with substrate; via pyruvic acid is the cysteine 242. Cysteine 242 is subject to Pyruvic acid (Cys).

In terms of assembly, heterohexamer of two alpha, two beta and two gamma subunits. Component of the glycine reductase complex, together with components A and C. PB is substrate specific. The peptide chain is cleaved into beta and alpha chains, and the alpha chain N-terminal cysteine is deaminated and oxidized to form a reactive pyruvoyl group.

It carries out the reaction acetyl phosphate + [thioredoxin]-disulfide + NH4(+) + H2O = [thioredoxin]-dithiol + glycine + phosphate + H(+). Functionally, in the first step of glycine reductase, the substrate is bound to component PB via a Schiff base intermediate. Then the PB-activated substrate is nucleophilically attacked by the selenol anion of component PA to transform it to a carboxymethylated selenoether and the respective amine. By action of component PC, acetyl phosphate is formed, leaving component PA in its oxidized state. Finally component PA becomes reduced by the thioredoxin system to start a new catalytic cycle of reductive deamination. This chain is Glycine reductase complex component B subunits alpha and beta (grdE), found in Peptoclostridium acidaminophilum (Eubacterium acidaminophilum).